The following is a 492-amino-acid chain: Catalase-1 (492 aa).

Catalysis depends on residues His65 and Asn138. Position 348 (Tyr348) interacts with heme.

Belongs to the catalase family. In terms of assembly, homotetramer and heterotetramer. At least six or seven isozymes are produced from a mixture of 3 gene products. Interacts with NCA1. Interacts with LSD1. Heme serves as cofactor.

The protein localises to the cytoplasm. The catalysed reaction is 2 H2O2 = O2 + 2 H2O. Its function is as follows. Occurs in almost all aerobically respiring organisms and serves to protect cells from the toxic effects of hydrogen peroxide. The polypeptide is Catalase-1 (CAT1) (Arabidopsis thaliana (Mouse-ear cress)).